The primary structure comprises 1279 residues: MENTQVIDWDAEEEEETEISSGSLGYSVEPIGRLRFFSGTHGPERDFPLYLGKNVVGRSPDCSVALPFPSISKQHAVIEISAWNKAPILQDCGSLNGTQIVKPPRVLAPGVSHRLRDQELILFADFPCQYHRLNVPPPLVPRSLLTIEKTPRIRGRSQNSRVLLAEDSEEEGDFPSGRSVANGSRNTASPSATVVPESDEEGSSPGPSVPGPSSPFGLGSDTDESQGQQPGVEESSLADNSGAAGEPEQPEVNGVTTGTLAQPTKDKFKDTKMKEEAGSAGVPVGSVVEGSPTLGEDSDTEADEERQPSGSGDSDTDVEEERVPVKKNQVLLGVGIGGPGARGVAHLQDSPTGSDTDVEEDKTALAAPPERSHTAMVINSDTDEEERGEEEEVSAALTLARLKERGIALWSGEPGTEEVKSQPQVLVERSQSASGRDSDTDVEEGSSGGKREIVPDSPMDVDETLTVTQPESQPPCRPNDVDEDVDMSSPGSHLEGKKASSALVDKNRAQVEEEVPGPSVTLGEKHQVPLEGAQPPEEARETAVQEGSSSPVADIRMSQQPVAEDAGTECAAAVSEQKSALEVGAQSRSPAAPVEQVVVRTDTSGDPTLPQREGAQTPTGREREAHVGGTKHAKECCDEPEDLCLSATQCFVEGESQHPGAVQSLEDEPTQVFPCLPQEPGPSHLSLPTPGADTLDVPWEVLATQPFCLREQTETSEPIDTHEAHGSQPSLPGEPPGHQHPVPTSLDHTELLRIDDREMQTVEKAMGHLSCQMMPDGKASGDDPEPSDHRLFSPVPEASASPQSLLTSQSQKQSTPQPMFPTSSSELALPETLHTKPNVRPRRSSRMTPSPHSSAALKPYTTCPTNQPAASRPTSRPTRGRANRSSTRTPELIVPTGPELQPSTSTEQPGIPNLTSQVTEGRAHSTSVNMPEPVLTGPEAQPLTSAEQSVTSNLNPRAQPLTLEPVPQTSHQRRRRATGKQGSRTAPVGPKSYSTPAEPEPQSSASQSSGASEADSPHQKRPRRQVTQKTVVVKEEDPGEIQVKEEPQETAIPTPGKRKRDPAEGETQGNPTRSRRTKPNQEAAAPKVLFTGVVDSRGERAVLALGGSLASSVNEASHLVTDRIRRTVKFLCAVGKGIPILSLNWLYQSRKAGCFLPPDDYLVTDPEQEKNFSFSLRDSLSRARERRLLEDYEIHVTPGVQPPPPQMGEIISCCGGTVLPSMPHSYKLHRVVITCTEDLPRCAIASRLGLPLLSPEFLLTGVLKQEATPEAFVLSNLEM.

The interval 1 to 22 (MENTQVIDWDAEEEEETEISSG) is disordered. The interval 1 to 150 (MENTQVIDWD…PRSLLTIEKT (150 aa)) is interaction with CHEK2. Residues 2-222 (ENTQVIDWDA…SSPFGLGSDT (221 aa)) are interaction with the MRN complex. At T4 the chain carries Phosphothreonine. A compositionally biased stretch (acidic residues) spans 9-18 (WDAEEEEETE). Residues 54–105 (NVVGRSPDCSVALPFPSISKQHAVIEISAWNKAPILQDCGSLNGTQIVKPPR) form the FHA domain. T146 bears the Phosphothreonine mark. 3 disordered regions span residues 156-394 (RSQN…EEVS), 409-634 (LWSG…KHAK), and 714-744 (ETSEPIDTHEAHGSQPSLPGEPPGHQHPVPT). Phosphoserine occurs at positions 168 and 176. A compositionally biased stretch (polar residues) spans 179 to 192 (SVANGSRNTASPSA). 2 positions are modified to phosphoserine: S198 and S220. At T222 the chain carries Phosphothreonine. Residues 264–277 (TKDKFKDTKMKEEA) are compositionally biased toward basic and acidic residues. Residues 278–292 (GSAGVPVGSVVEGSP) are compositionally biased toward low complexity. Phosphoserine is present on S298. T300 is subject to Phosphothreonine. The residue at position 314 (S314) is a Phosphoserine. A Phosphothreonine modification is found at T316. Phosphoserine occurs at positions 350 and 354. Residue T356 is modified to Phosphothreonine. Phosphoserine occurs at positions 372 and 380. The span at 381–393 (DTDEEERGEEEEV) shows a compositional bias: acidic residues. T382 is modified (phosphothreonine). S394, S411, S421, S434, and S438 each carry phosphoserine. Over residues 421–435 (SQPQVLVERSQSASG) the composition is skewed to polar residues. T440 bears the Phosphothreonine mark. S457 is subject to Phosphoserine. Residue T466 is modified to Phosphothreonine. Phosphoserine is present on residues S488, S489, S550, S587, and S589. The span at 545–561 (QEGSSSPVADIRMSQQP) shows a compositional bias: polar residues. A compositionally biased stretch (basic and acidic residues) spans 620–634 (GREREAHVGGTKHAK). Phosphoserine is present on residues S730 and S745. K764 bears the N6-acetyllysine mark. The tract at residues 772-1086 (QMMPDGKASG…TKPNQEAAAP (315 aa)) is disordered. Phosphoserine occurs at positions 793, 801, and 824. The span at 798–817 (ASASPQSLLTSQSQKQSTPQ) shows a compositional bias: low complexity. Polar residues-rich tracts occupy residues 862-889 (TCPTNQPAASRPTSRPTRGRANRSSTRT), 901-929 (QPSTSTEQPGIPNLTSQVTEGRAHSTSVN), and 942-956 (PLTSAEQSVTSNLNP). Residue T889 is modified to Phosphothreonine. T951 carries the phosphothreonine modification. A Glycyl lysine isopeptide (Lys-Gly) (interchain with G-Cter in SUMO2) cross-link involves residue K991. Over residues 994–1014 (STPAEPEPQSSASQSSGASEA) the composition is skewed to low complexity. A phosphoserine mark is found at S1008, S1009, S1012, and S1016. Over residues 1032–1047 (VVKEEDPGEIQVKEEP) the composition is skewed to basic and acidic residues. K1034 participates in a covalent cross-link: Glycyl lysine isopeptide (Lys-Gly) (interchain with G-Cter in SUMO1); alternate. K1034 is covalently cross-linked (Glycyl lysine isopeptide (Lys-Gly) (interchain with G-Cter in SUMO2); alternate). T1054 is modified (phosphothreonine). BRCT domains lie at 1085–1163 (APKV…DYLV) and 1184–1275 (RERR…FVLS).

In terms of assembly, homodimer. Interacts with H2AX, which requires phosphorylation of H2AX on 'Ser-139'. Interacts with the MRN complex, composed of MRE11, RAD50, and NBN. Interacts with CHEK2, which requires ATM-mediated phosphorylation of 'Thr-68' within the FHA domain of CHEK2. Interacts constitutively with the BRCA1-BARD1 complex, SMC1A and TP53BP1. Interacts with ATM and FANCD2, and these interactions are reduced upon DNA damage. Also interacts with the PRKDC complex, composed of XRCC6/KU70, XRCC5/KU80 and PRKDC/XRCC7. This interaction may be required for PRKDC autophosphorylation, which is essential for DNA double strand break (DSB) repair. When phosphorylated by ATM, interacts with RNF8 (via FHA domain). Interacts with CEP164. When phosphorylated, interacts with APTX (via FHA-like domain). Interacts (when phosphorylated) with TOPBP1; promoting TOPBP1 localization to DNA damage sites during mitosis. Interacts (when phosphorylated) with NBN; promoting NBN and MRN complex localization to DNA damage sites. Phosphorylated upon exposure to ionizing radiation (IR), ultraviolet radiation (UV), and hydroxyurea (HU). Phosphorylation in response to IR requires ATM, NBN, and possibly CHEK2. Also phosphorylated during the G2/M phase of the cell cycle and during activation of the mitotic spindle checkpoint. Phosphorylation at Thr-4 by ATM stabilizes and enhances homodimerization via the FHA domain. Phosphorylated at Ser-168 and Ser-198 by CK2 in response to DNA damage during mitosis, promoting interaction with TOPBP1. Phosphorylated by CK2 in response to DNA damage, promoting interaction with NBN and recruitment of the MRN complex to DNA damage sites. Post-translationally, sumoylation at Lys-1034 by PIAS4 following DNA damage promotes ubiquitin-mediated degradation. In terms of processing, ubiquitinated by RNF4, leading to proteasomal degradation; undergoes 'Lys-48'-linked polyubiquitination.

The protein resides in the nucleus. Its subcellular location is the chromosome. Histone reader protein required for checkpoint-mediated cell cycle arrest in response to DNA damage within both the S phase and G2/M phases of the cell cycle. Specifically recognizes and binds histone H2AX phosphorylated at 'Ser-139', a marker of DNA damage, serving as a scaffold for the recruitment of DNA repair and signal transduction proteins to discrete foci of DNA damage sites. Also required for downstream events subsequent to the recruitment of these proteins. These include phosphorylation and activation of the ATM, CHEK1 and CHEK2 kinases, and stabilization of TP53/p53 and apoptosis. ATM and CHEK2 may also be activated independently by a parallel pathway mediated by TP53BP1. Required for chromosomal stability during mitosis by promoting recruitment of TOPBP1 to DNA double strand breaks (DSBs): TOPBP1 forms filamentous assemblies that bridge MDC1 and tether broken chromosomes during mitosis. Required for the repair of DSBs via homologous recombination by promoting recruitment of NBN component of the MRN complex to DSBs. This is Mediator of DNA damage checkpoint protein 1 (Mdc1) from Rattus norvegicus (Rat).